A 401-amino-acid chain; its full sequence is Nicotinate phosphoribosyltransferase (401 aa).

The residue at position 221 (His221) is a Phosphohistidine; by autocatalysis.

The protein belongs to the NAPRTase family. In terms of processing, transiently phosphorylated on a His residue during the reaction cycle. Phosphorylation strongly increases the affinity for substrates and increases the rate of nicotinate D-ribonucleotide production. Dephosphorylation regenerates the low-affinity form of the enzyme, leading to product release.

The catalysed reaction is nicotinate + 5-phospho-alpha-D-ribose 1-diphosphate + ATP + H2O = nicotinate beta-D-ribonucleotide + ADP + phosphate + diphosphate. It functions in the pathway cofactor biosynthesis; NAD(+) biosynthesis; nicotinate D-ribonucleotide from nicotinate: step 1/1. In terms of biological role, catalyzes the synthesis of beta-nicotinate D-ribonucleotide from nicotinate and 5-phospho-D-ribose 1-phosphate at the expense of ATP. The protein is Nicotinate phosphoribosyltransferase of Yersinia enterocolitica serotype O:8 / biotype 1B (strain NCTC 13174 / 8081).